Reading from the N-terminus, the 1451-residue chain is Glutamate receptor ionotropic, NMDA 2A (1451 aa).

Positions 1–20 (MGMFVLLLYTFLYAGDLGHG) are cleaved as a signal peptide. The Extracellular segment spans residues 21 to 547 (AEKSFPVLNI…PSAFLEPFSA (527 aa)). An N-linked (GlcNAc...) asparagine glycan is attached at N67. C79 and C312 are oxidised to a cystine. 3 residues coordinate Zn(2+): H120, D258, and D274. N-linked (GlcNAc...) asparagine glycosylation is found at N332, N372, N435, and N436. 2 disulfide bridges follow: C421–C447 and C428–C448. L-glutamate contacts are provided by S503, T505, and R510. N-linked (GlcNAc...) asparagine glycosylation is present at N533. A helical transmembrane segment spans residues 548–568 (SVWVMMFVMLLLVSAMAVFIF). Residues 569–592 (EYFSPVGYNRNLAQGKDPHGPSFT) lie on the Cytoplasmic side of the membrane. Residues 591–612 (FTIGKAVWLLWGLVFNNSVPVQ) form a pore-forming region. Positions 593-612 (IGKAVWLLWGLVFNNSVPVQ) form an intramembrane region, discontinuously helical. Residues 613 to 617 (NPKGT) lie on the Cytoplasmic side of the membrane. A helical membrane pass occupies residues 618–637 (TSKIIVSIWAFFAVIFLASY). The Extracellular portion of the chain corresponds to 638–808 (TANLAAFMIQ…VMSSQLDIDN (171 aa)). An N-linked (GlcNAc...) asparagine glycan is attached at N679. 3 residues coordinate L-glutamate: S681, T682, and D723. A disulfide bond links C737 and C792. The helical transmembrane segment at 809–829 (MAGVFYMLAAAMALSLITFVW) threads the bilayer. At 830-1451 (EHLFYWKLRF…KKMPSLESDV (622 aa)) the chain is on the cytoplasmic side. Polar residues predominate over residues 1011 to 1022 (TLRQTQGSVNEN). Disordered stretches follow at residues 1011 to 1080 (TLRQ…VSAK) and 1100 to 1165 (NRDK…GRLP). 3 stretches are compositionally biased toward basic and acidic residues: residues 1055 to 1073 (CHID…DNLK), 1100 to 1113 (NRDK…DKEP), and 1138 to 1149 (YQDHNDNYRKTE).

Belongs to the glutamate-gated ion channel (TC 1.A.10.1) family. In terms of assembly, heterotetramer. Forms heterotetrameric channels composed of two GluN1/zeta subunits (GRIN1), and two identical GluN2/epsilon subunits (GRIN2A, GRIN2B, GRIN2C or GRIN2D) or GluN3 subunits (GRIN3A or GRIN3B) (in vitro). In vivo, the subunit composition may depend on the expression levels of the different subunits.

It is found in the cell membrane. The protein localises to the postsynaptic cell membrane. The catalysed reaction is Ca(2+)(in) = Ca(2+)(out). It carries out the reaction Na(+)(in) = Na(+)(out). The enzyme catalyses K(+)(in) = K(+)(out). Component of N-methyl-D-aspartate (NMDA) receptors (NMDARs) that function as heterotetrameric, ligand-gated cation channels with high calcium permeability and voltage-dependent block by Mg(2+). MDARs participate in synaptic plasticity. Channel activation requires binding of the neurotransmitter L-glutamate to the GluN2 subunit, glycine binding to the GluN1 subunit, plus membrane depolarization to eliminate channel inhibition by Mg(2+). NMDARs mediate simultaneously the potasium efflux and the influx of calcium and sodium. Each GluN2 subunit confers differential attributes to channel properties, including activation, deactivation and desensitization kinetics, pH sensitivity, Ca2(+) permeability, and binding to allosteric modulators. Plays a role in dendritic branching in brain neurons and in synaptic plasticity. In Xenopus laevis (African clawed frog), this protein is Glutamate receptor ionotropic, NMDA 2A.